We begin with the raw amino-acid sequence, 123 residues long: Galectin-2 (123 aa).

One can recognise a Galectin domain in the interval 4–123; sequence KVEIMNMDMK…LRYLSVQGGF (120 aa). 65-71 provides a ligand contact to a beta-D-galactoside; the sequence is WGKEQRD.

In terms of assembly, homodimer.

In terms of biological role, this protein binds beta-galactoside. Its physiological function is not yet known. The protein is Galectin-2 (LGALS2) of Sus scrofa (Pig).